The following is a 263-amino-acid chain: Lens fiber major intrinsic protein (263 aa).

The Cytoplasmic portion of the chain corresponds to 1–9 (MWELRSASF). The chain crosses the membrane as a helical span at residues 10–29 (WRAIFAEFFATLFYVFFGLG). Over 30 to 41 (ASLRWAPGPLHV) the chain is Extracellular. A helical transmembrane segment spans residues 42-59 (LQVALAFGLALATLVQTV). Residues 60–61 (GH) are Cytoplasmic-facing. The segment at residues 62–77 (ISGAHVNPAVTFAFLV) is an intramembrane region (discontinuously helical). The short motif at 68 to 70 (NPA) is the NPA 1 element. Over 78–82 (GSQMS) the chain is Cytoplasmic. A helical membrane pass occupies residues 83 to 106 (LLRAFCYIAAQLLGAVAGAAVLYS). At 107–127 (VTPPAVRGNLALNTLHAGVSV) the chain is on the extracellular side. A helical transmembrane segment spans residues 128 to 148 (GQATTVEIFLTLQFVLCIFAT). The Cytoplasmic segment spans residues 149–156 (YDERRNGR). The chain crosses the membrane as a helical span at residues 157 to 175 (MGSVALAVGFSLTLGHLFG). At 176–178 (MYY) the chain is on the extracellular side. The discontinuously helical intramembrane region spans 179-193 (TGAGMNPARSFAPAI). Positions 184–186 (NPA) match the NPA 2 motif. Residues 194 to 200 (LTRNFSN) are Extracellular-facing. The helical transmembrane segment at 201–222 (HWVYWVGPIIGGGLGSLLYDFL) threads the bilayer. The Cytoplasmic portion of the chain corresponds to 223–263 (LFPRLKSVSERLSILKGARPSDSNGQPEGTGEPVELKTQAL). The interaction with CALM stretch occupies residues 227–237 (LKSVSERLSIL). Phosphoserine occurs at positions 235, 243, and 245. The disordered stretch occupies residues 240–263 (ARPSDSNGQPEGTGEPVELKTQAL). Position 246 is a deamidated asparagine (Asn246).

This sequence belongs to the MIP/aquaporin (TC 1.A.8) family. Homotetramer; each monomer provides an independent water pore. Two homotetramers on opposing membranes can dimerize, forming a cell-cell junction. Interacts with CALM; the calcium-calmodulin/CALM complex interacts with the cytoplasmic domains of two aquaporins, leading to channel closure. Interacts with BFSP1 (via C-terminus); prevents calcium-dependent inhibition of the water channel activity. In terms of processing, subject to partial proteolytic cleavage in the eye lens core. Partial proteolysis promotes interactions between tetramers from adjoining membranes. Fatty acylated at Met-1 and Lys-238. The acyl modifications, in decreasing order of ion abundance, are: oleoyl (C18:1) &gt; palmitoyl (C16:0) &gt; stearoyl (C18:0) &gt; eicosenoyl (C20:1) &gt; dihomo-gamma-linolenoyl (C20:3) &gt; palmitoleoyl (C16:1) &gt; eicosadienoyl (C20:2).

Its subcellular location is the cell membrane. The protein resides in the cell junction. The catalysed reaction is H2O(in) = H2O(out). The water channel activity is inhibited by calcium through calmodulin/CALM. Its function is as follows. Aquaporins form homotetrameric transmembrane channels, with each monomer independently mediating water transport across the plasma membrane along its osmotic gradient. Specifically expressed in lens fiber cells, this aquaporin is crucial for maintaining lens water homeostasis and transparency. Beyond water permeability, it also acts as a cell-to-cell adhesion molecule, forming thin junctions between lens fiber cells that are essential for maintaining the ordered structure and transparency of the lens. This Mus musculus (Mouse) protein is Lens fiber major intrinsic protein.